A 1684-amino-acid polypeptide reads, in one-letter code: Latrophilin Cirl (1684 aa).

Over 1 to 765 (MASNNYIQIM…LFTMFDGNMR (765 aa)) the chain is Extracellular. Residues 21-110 (ACEGKKLTIE…KYLEAHYQCV (90 aa)) form the SUEL-type lectin domain. 4 N-linked (GlcNAc...) asparagine glycosylation sites follow: Asn138, Asn251, Asn297, and Asn336. The tract at residues 181 to 300 (PPATHATPPG…GPSVSSNGSA (120 aa)) is disordered. Composition is skewed to polar residues over residues 250–260 (SNATAPSNTRI) and 278–300 (KSSP…NGSA). The tract at residues 370–391 (SFDEDDEEMAGTSTTTPMSTSS) is disordered. Residues 381 to 391 (TSTTTPMSTSS) are compositionally biased toward low complexity. N-linked (GlcNAc...) asparagine glycans are attached at residues Asn396, Asn653, Asn701, and Asn728. Residues 559–752 (RSVVQKVKNI…AILMDVVDEH (194 aa)) form the GAIN-B domain. Cystine bridges form between Cys707–Cys734 and Cys722–Cys736. The interval 707-752 (CVFWNYIDHAWSANGCSLESTNRTHSVCSCNHLTNFAILMDVVDEH) is GPS. Residues 766-786 (IFIYISIAICVVFIVIALLTL) traverse the membrane as a helical segment. Residues 787–799 (KLFNGVFVKSART) lie on the Cytoplasmic side of the membrane. A helical transmembrane segment spans residues 800–820 (SIYINIYICLLAIELLFLLGI). The Extracellular portion of the chain corresponds to 821 to 826 (EQTETS). Residues 827 to 847 (IFCGFITVFLHCAILSGTSWF) form a helical membrane-spanning segment. Topologically, residues 848-873 (CYEAFHSYSTLTSDELLLEVDQTPKV) are cytoplasmic. A helical transmembrane segment spans residues 874–894 (NCYYLLSYGLSLSVVAISLVI). Residues 895 to 918 (NPSTYTQNDYCVLMEANAVFYATF) are Extracellular-facing. The chain crosses the membrane as a helical span at residues 919–939 (VAPVLIFFMAAIGYTFLSWII). At 940 to 966 (MCRKSRTGLKTKEHTRLATVRFDIRCS) the chain is on the cytoplasmic side. Residues 967–987 (FVFFLLLSAVWCSAYFYLRGA) form a helical membrane-spanning segment. Residues 988-994 (KMDEDVT) lie on the Extracellular side of the membrane. The helical transmembrane segment at 995–1015 (GIYGYNFICFNTLLGLYIFVF) threads the bilayer. The Cytoplasmic portion of the chain corresponds to 1016 to 1684 (HCIQNEKIRR…VRCYLEPLAK (669 aa)). The disordered stretch occupies residues 1080-1100 (PLGTNDDAHDEQQQQQHMSAT). Phosphoserine is present on residues Ser1156, Ser1247, and Ser1254. Disordered stretches follow at residues 1228-1255 (KPNS…LHSR), 1270-1353 (KTKP…APPP), 1441-1520 (SRYG…LPPQ), and 1587-1669 (SMRG…SAML). Residues 1298–1314 (QQQQQLRQQRQQQQQQL) show a composition bias toward low complexity. Residues Ser1315 and Ser1316 each carry the phosphoserine modification. Residues 1328–1348 (LHLQHQQQQQQQRRAGGQQQL) show a composition bias toward low complexity. Residues 1455–1466 (RNQQQQQHSLAQ) show a composition bias toward polar residues. Acidic residues-rich tracts occupy residues 1476-1489 (DEDD…EETT) and 1499-1512 (CDEE…DMED). Residues 1631–1654 (QQLQKLSPQSTTSSSSHTSHSNPH) are compositionally biased toward low complexity.

This sequence belongs to the G-protein coupled receptor 2 family. LN-TM7 subfamily. In terms of assembly, forms a heterodimer, consisting of a large extracellular region non-covalently linked to a seven-transmembrane moiety. Post-translationally, proteolytically cleaved into 2 subunits, an extracellular subunit and a seven-transmembrane subunit.

It localises to the cell membrane. The chain is Latrophilin Cirl from Drosophila persimilis (Fruit fly).